We begin with the raw amino-acid sequence, 187 residues long: Elongation factor P (187 aa).

It belongs to the elongation factor P family.

The protein localises to the cytoplasm. Its pathway is protein biosynthesis; polypeptide chain elongation. Its function is as follows. Involved in peptide bond synthesis. Stimulates efficient translation and peptide-bond synthesis on native or reconstituted 70S ribosomes in vitro. Probably functions indirectly by altering the affinity of the ribosome for aminoacyl-tRNA, thus increasing their reactivity as acceptors for peptidyl transferase. The polypeptide is Elongation factor P (Kocuria rhizophila (strain ATCC 9341 / DSM 348 / NBRC 103217 / DC2201)).